Reading from the N-terminus, the 314-residue chain is Elongation factor Ts (314 aa).

The involved in Mg(2+) ion dislocation from EF-Tu stretch occupies residues 82–85 (TDFV).

The protein belongs to the EF-Ts family.

It is found in the cytoplasm. Associates with the EF-Tu.GDP complex and induces the exchange of GDP to GTP. It remains bound to the aminoacyl-tRNA.EF-Tu.GTP complex up to the GTP hydrolysis stage on the ribosome. The polypeptide is Elongation factor Ts (Nostoc punctiforme (strain ATCC 29133 / PCC 73102)).